The chain runs to 905 residues: MLSCASFNKLMYPSAADVAKPPMVGLEVEAGSIGSLSSLHALPSTTSVGSGAPSETQSEISSVDSDWSDIRAIAMKLGVQNPDDLHTERFKVDRQKLEQLIKAESSIEGMNGAEYFFHDIMNTTDTYVSWPCRLKIGAKSKKDPHVRIVGKVDQVQRAKERILSSLDSRGTRVIMKMDVSYTDHSYIIGRGGNNIKRIMDDTHTHIHFPDSNRSNPTEKSNQVSLCGSLEGVERARALVRLSTPLLISFEMPVMGPNKPQPDHETPYIKMIETKFNVQVIFSTRPKLHTSLVLVKGSEKESAQVRDATQLLINFACESIASQILVNVQMEISPQHHEIVKGKNNVNLLSIMERTQTKIIFPDLSDMNVKPLKKSQVTISGRIDDVYLARQQLLGNLPVALIFDFPDNHNDASEIMSLNTKYGVYITLRQKQRQSTLAIVVKGVEKFIDKIYEARQEILRLATPFVKPEIPDYYFMPKDKDLNLAYRTQLTALLAGYVDSPKTPSLLPPSLAGQLTPYANNNHLLLNANGLATPTGVCAPTQKYMQLHNSFQQAQNRSMVAGGQSNNGNYLQVPGAVAPPLKPPTVSPRNSCSQNTSGYQSFSSSTTSLEQSYPPYAQLPGTVSSTSSSTAGSQNRAHYSPDSTYGSEGGGVGGGGGGGARLGRRLSDGVLLGLSNSNGGGGNSGGAHLLPGSAESYRSLHYDLGGNKHSGHRAFDFDMKRALGYKAMERTPVAGELRTPTTAWMGMGLSSTSPAPAPLENGENGAAGGGASSGWRLPPGLGSPYGLSATTGLLDATPVNRRMQLAKHKDIQTLLTSLGLEHYIKIFVLNEIDLEVFTTLTEENLMELGIAAFGARKKLLTAIHTLLANEAACSTMPSSSSSQNSSSPRFSGSAAPGAERRPSNQW.

2 consecutive KH domains span residues 172 to 239 and 324 to 392; these read RVIM…RALV and LVNV…RQQL. A Phosphoserine modification is found at serine 557. Residues 559–569 are compositionally biased toward polar residues; sequence VAGGQSNNGNY. The segment at 559 to 660 is disordered; sequence VAGGQSNNGN…VGGGGGGGAR (102 aa). Serine 586 carries the post-translational modification Phosphoserine. The span at 592–611 shows a compositional bias: low complexity; it reads SQNTSGYQSFSSSTTSLEQS. Polar residues predominate over residues 630–645; sequence AGSQNRAHYSPDSTYG. 2 positions are modified to phosphoserine: serine 639 and serine 642. Threonine 643 is modified (phosphothreonine). Position 644 is a phosphotyrosine (tyrosine 644). Phosphoserine is present on residues serine 646, serine 666, serine 692, and serine 695. Residues 646-660 show a composition bias toward gly residues; the sequence is SEGGGVGGGGGGGAR. Tyrosine 696 bears the Phosphotyrosine mark. The disordered stretch occupies residues 751-772; sequence TSPAPAPLENGENGAAGGGASS. The region spanning 805 to 868 is the SAM domain; that stretch reads AKHKDIQTLL…LTAIHTLLAN (64 aa). Residues 874–892 show a composition bias toward low complexity; it reads TMPSSSSSQNSSSPRFSGS. A disordered region spans residues 874 to 905; that stretch reads TMPSSSSSQNSSSPRFSGSAAPGAERRPSNQW.

Belongs to the BicC family. Abundantly expressed in ovaries and early embryos.

In terms of biological role, RNA-binding protein that is involved in oogenesis. Required for correct targeting of the migrating anterior follicle cells and the establishment of anterior-posterior polarity in the oocyte. May act as translational repressor of oskar during oogenesis. Function seems to be sensitive to small changes in expression. The polypeptide is Protein bicaudal C (BicC) (Drosophila melanogaster (Fruit fly)).